The following is a 289-amino-acid chain: Protoheme IX farnesyltransferase (289 aa).

9 consecutive transmembrane segments (helical) span residues 18 to 38 (VTSL…EQSP), 40 to 60 (GFLI…SFIF), 87 to 107 (VVQA…VLAV), 111 to 131 (LLTA…YTIF), 139 to 159 (NIVI…AAIG), 168 to 188 (SLFM…AIFL), 212 to 232 (SIFF…FLES), 234 to 254 (MGFL…ILSY), and 269 to 289 (FFFS…DHLI).

This sequence belongs to the UbiA prenyltransferase family. Protoheme IX farnesyltransferase subfamily.

It localises to the cell inner membrane. The enzyme catalyses heme b + (2E,6E)-farnesyl diphosphate + H2O = Fe(II)-heme o + diphosphate. It functions in the pathway porphyrin-containing compound metabolism; heme O biosynthesis; heme O from protoheme: step 1/1. In terms of biological role, converts heme B (protoheme IX) to heme O by substitution of the vinyl group on carbon 2 of heme B porphyrin ring with a hydroxyethyl farnesyl side group. In Leptospira interrogans serogroup Icterohaemorrhagiae serovar copenhageni (strain Fiocruz L1-130), this protein is Protoheme IX farnesyltransferase.